The following is a 212-amino-acid chain: 3-isopropylmalate dehydratase small subunit (212 aa).

Belongs to the LeuD family. LeuD type 1 subfamily. Heterodimer of LeuC and LeuD.

It carries out the reaction (2R,3S)-3-isopropylmalate = (2S)-2-isopropylmalate. Its pathway is amino-acid biosynthesis; L-leucine biosynthesis; L-leucine from 3-methyl-2-oxobutanoate: step 2/4. Catalyzes the isomerization between 2-isopropylmalate and 3-isopropylmalate, via the formation of 2-isopropylmaleate. This chain is 3-isopropylmalate dehydratase small subunit, found in Pseudomonas aeruginosa (strain UCBPP-PA14).